Consider the following 347-residue polypeptide: 4-hydroxyproline 2-epimerase (347 aa).

Residue Q85 participates in substrate binding. The active-site Proton acceptor is the S93. Residues 94–95 and D251 each bind substrate; that span reads GS. C255 acts as the Proton donor in catalysis. 256-257 lines the substrate pocket; it reads GT.

Belongs to the proline racemase family.

The catalysed reaction is trans-4-hydroxy-L-proline = cis-4-hydroxy-D-proline. Catalyzes the epimerization of trans-4-hydroxy-L-proline (t4LHyp) to cis-4-hydroxy-D-proline (c4DHyp). May be involved in a degradation pathway of t4LHyp. Can also catalyze the epimerization of trans-3-hydroxy-L-proline (t3LHyp) to cis-3-hydroxy-D-proline (c3DHyp) in vitro. Displays no proline racemase activity. This Allorhizobium ampelinum (strain ATCC BAA-846 / DSM 112012 / S4) (Agrobacterium vitis (strain S4)) protein is 4-hydroxyproline 2-epimerase.